Here is a 132-residue protein sequence, read N- to C-terminus: Small ribosomal subunit protein uS8 (132 aa).

The protein belongs to the universal ribosomal protein uS8 family. Part of the 30S ribosomal subunit. Contacts proteins S5 and S12.

In terms of biological role, one of the primary rRNA binding proteins, it binds directly to 16S rRNA central domain where it helps coordinate assembly of the platform of the 30S subunit. The polypeptide is Small ribosomal subunit protein uS8 (Syntrophotalea carbinolica (strain DSM 2380 / NBRC 103641 / GraBd1) (Pelobacter carbinolicus)).